A 728-amino-acid chain; its full sequence is Catalase-peroxidase (728 aa).

The tract at residues M1–D26 is disordered. Residues W96 to Y218 constitute a cross-link (tryptophyl-tyrosyl-methioninium (Trp-Tyr) (with M-244)). H97 functions as the Proton acceptor in the catalytic mechanism. Positions Y218–M244 form a cross-link, tryptophyl-tyrosyl-methioninium (Tyr-Met) (with W-96). H259 is a heme b binding site.

The protein belongs to the peroxidase family. Peroxidase/catalase subfamily. In terms of assembly, homodimer or homotetramer. Requires heme b as cofactor. Post-translationally, formation of the three residue Trp-Tyr-Met cross-link is important for the catalase, but not the peroxidase activity of the enzyme.

It carries out the reaction H2O2 + AH2 = A + 2 H2O. The catalysed reaction is 2 H2O2 = O2 + 2 H2O. Its function is as follows. Bifunctional enzyme with both catalase and broad-spectrum peroxidase activity. Important for stationary phase survival. This chain is Catalase-peroxidase, found in Rhizobium etli (strain ATCC 51251 / DSM 11541 / JCM 21823 / NBRC 15573 / CFN 42).